The following is a 431-amino-acid chain: Glutamate-1-semialdehyde 2,1-aminomutase 2 (431 aa).

Position 268 is an N6-(pyridoxal phosphate)lysine (K268).

The protein belongs to the class-III pyridoxal-phosphate-dependent aminotransferase family. HemL subfamily. In terms of assembly, homodimer. Requires pyridoxal 5'-phosphate as cofactor.

The protein resides in the cytoplasm. It catalyses the reaction (S)-4-amino-5-oxopentanoate = 5-aminolevulinate. Its pathway is porphyrin-containing compound metabolism; protoporphyrin-IX biosynthesis; 5-aminolevulinate from L-glutamyl-tRNA(Glu): step 2/2. In Anoxybacillus flavithermus (strain DSM 21510 / WK1), this protein is Glutamate-1-semialdehyde 2,1-aminomutase 2.